We begin with the raw amino-acid sequence, 38 residues long: Photosystem II reaction center protein L (38 aa).

Residues 17 to 37 (SLFWGLLLIFVLAVLFSSYFF) traverse the membrane as a helical segment.

This sequence belongs to the PsbL family. In terms of assembly, PSII is composed of 1 copy each of membrane proteins PsbA, PsbB, PsbC, PsbD, PsbE, PsbF, PsbH, PsbI, PsbJ, PsbK, PsbL, PsbM, PsbT, PsbY, PsbZ, Psb30/Ycf12, at least 3 peripheral proteins of the oxygen-evolving complex and a large number of cofactors. It forms dimeric complexes.

The protein resides in the plastid. It localises to the chloroplast thylakoid membrane. Its function is as follows. One of the components of the core complex of photosystem II (PSII). PSII is a light-driven water:plastoquinone oxidoreductase that uses light energy to abstract electrons from H(2)O, generating O(2) and a proton gradient subsequently used for ATP formation. It consists of a core antenna complex that captures photons, and an electron transfer chain that converts photonic excitation into a charge separation. This subunit is found at the monomer-monomer interface and is required for correct PSII assembly and/or dimerization. In Cyanidium caldarium (Red alga), this protein is Photosystem II reaction center protein L.